Here is a 357-residue protein sequence, read N- to C-terminus: Chorismate synthase (357 aa).

Arg46 contributes to the NADP(+) binding site. FMN is bound by residues 123-125, 235-236, Gly275, 290-294, and Arg316; these read RSS, NA, and KPTPS.

The protein belongs to the chorismate synthase family. As to quaternary structure, homotetramer. FMNH2 is required as a cofactor.

It catalyses the reaction 5-O-(1-carboxyvinyl)-3-phosphoshikimate = chorismate + phosphate. It functions in the pathway metabolic intermediate biosynthesis; chorismate biosynthesis; chorismate from D-erythrose 4-phosphate and phosphoenolpyruvate: step 7/7. In terms of biological role, catalyzes the anti-1,4-elimination of the C-3 phosphate and the C-6 proR hydrogen from 5-enolpyruvylshikimate-3-phosphate (EPSP) to yield chorismate, which is the branch point compound that serves as the starting substrate for the three terminal pathways of aromatic amino acid biosynthesis. This reaction introduces a second double bond into the aromatic ring system. This chain is Chorismate synthase, found in Sulfurovum sp. (strain NBC37-1).